The sequence spans 689 residues: 1,4-alpha-glucan-branching enzyme (689 aa).

(1,4-alpha-D-glucosyl)n is bound by residues W93 and K128. D345 serves as the catalytic Nucleophile. E400 functions as the Proton donor in the catalytic mechanism.

The protein belongs to the glycosyl hydrolase 13 family. GlgB subfamily.

The protein localises to the cytoplasm. It catalyses the reaction Transfers a segment of a (1-&gt;4)-alpha-D-glucan chain to a primary hydroxy group in a similar glucan chain.. It functions in the pathway glycan biosynthesis; glycogen biosynthesis. Its function is as follows. Glycogen-branching enzyme participates in the glycogen biosynthetic process along with glycogenin and glycogen synthase. Generates alpha-1,6-glucosidic branches from alpha-1,4-linked glucose chains, to increase solubility of the glycogen polymer. The chain is 1,4-alpha-glucan-branching enzyme (gbeA) from Aspergillus oryzae (strain ATCC 42149 / RIB 40) (Yellow koji mold).